The sequence spans 430 residues: Glucose-6-phosphate isomerase (430 aa).

The active-site Proton donor is Glu284. Residues His305 and Lys420 contribute to the active site.

Belongs to the GPI family.

The protein localises to the cytoplasm. It carries out the reaction alpha-D-glucose 6-phosphate = beta-D-fructose 6-phosphate. It functions in the pathway carbohydrate biosynthesis; gluconeogenesis. It participates in carbohydrate degradation; glycolysis; D-glyceraldehyde 3-phosphate and glycerone phosphate from D-glucose: step 2/4. Its function is as follows. Catalyzes the reversible isomerization of glucose-6-phosphate to fructose-6-phosphate. In Mycoplasmopsis synoviae (strain 53) (Mycoplasma synoviae), this protein is Glucose-6-phosphate isomerase.